The sequence spans 564 residues: Arrestin domain-containing protein E (564 aa).

Positions Ser-74–Asn-146 are enriched in low complexity. Disordered stretches follow at residues Ser-74 to Asn-150 and Ala-245 to Ser-286. The segment covering Pro-250 to Gln-259 has biased composition (pro residues). The segment covering Gln-260–Gln-269 has biased composition (low complexity). Positions Ser-270–Pro-285 are enriched in polar residues. One can recognise an LIM zinc-binding domain in the interval Asp-348–Leu-413.

The protein is Arrestin domain-containing protein E (adcE) of Dictyostelium discoideum (Social amoeba).